Reading from the N-terminus, the 247-residue chain is Triosephosphate isomerase (247 aa).

Substrate contacts are provided by Asn-10 and Lys-12. The active-site Electrophile is His-95. Glu-165 serves as the catalytic Proton acceptor.

Belongs to the triosephosphate isomerase family. In terms of assembly, homodimer.

The enzyme catalyses D-glyceraldehyde 3-phosphate = dihydroxyacetone phosphate. It functions in the pathway carbohydrate biosynthesis; gluconeogenesis. It participates in carbohydrate degradation; glycolysis; D-glyceraldehyde 3-phosphate from glycerone phosphate: step 1/1. The protein is Triosephosphate isomerase (TPI1) of Yarrowia lipolytica (strain CLIB 122 / E 150) (Yeast).